Consider the following 508-residue polypeptide: Probable cytosol aminopeptidase (508 aa).

2 residues coordinate Mn(2+): Lys274 and Asp279. Lys286 is a catalytic residue. Mn(2+) is bound by residues Asp297, Asp356, and Glu358. Arg360 is a catalytic residue.

Belongs to the peptidase M17 family. Requires Mn(2+) as cofactor.

The protein localises to the cytoplasm. It catalyses the reaction Release of an N-terminal amino acid, Xaa-|-Yaa-, in which Xaa is preferably Leu, but may be other amino acids including Pro although not Arg or Lys, and Yaa may be Pro. Amino acid amides and methyl esters are also readily hydrolyzed, but rates on arylamides are exceedingly low.. The enzyme catalyses Release of an N-terminal amino acid, preferentially leucine, but not glutamic or aspartic acids.. Its function is as follows. Presumably involved in the processing and regular turnover of intracellular proteins. Catalyzes the removal of unsubstituted N-terminal amino acids from various peptides. The polypeptide is Probable cytosol aminopeptidase (Cutibacterium acnes (strain DSM 16379 / KPA171202) (Propionibacterium acnes)).